Here is a 426-residue protein sequence, read N- to C-terminus: Trigger factor (426 aa).

A PPIase FKBP-type domain is found at 160 to 240; the sequence is GDTVIGDVTK…IKEVKHLELP (81 aa).

It belongs to the FKBP-type PPIase family. Tig subfamily.

It is found in the cytoplasm. The catalysed reaction is [protein]-peptidylproline (omega=180) = [protein]-peptidylproline (omega=0). Functionally, involved in protein export. Acts as a chaperone by maintaining the newly synthesized protein in an open conformation. Functions as a peptidyl-prolyl cis-trans isomerase. This is Trigger factor from Chlorobaculum tepidum (strain ATCC 49652 / DSM 12025 / NBRC 103806 / TLS) (Chlorobium tepidum).